Consider the following 330-residue polypeptide: Phosphate acyltransferase (330 aa).

Belongs to the PlsX family. As to quaternary structure, homodimer. Probably interacts with PlsY.

Its subcellular location is the cytoplasm. The enzyme catalyses a fatty acyl-[ACP] + phosphate = an acyl phosphate + holo-[ACP]. The protein operates within lipid metabolism; phospholipid metabolism. Its function is as follows. Catalyzes the reversible formation of acyl-phosphate (acyl-PO(4)) from acyl-[acyl-carrier-protein] (acyl-ACP). This enzyme utilizes acyl-ACP as fatty acyl donor, but not acyl-CoA. In Bacillus cereus (strain AH820), this protein is Phosphate acyltransferase.